The following is a 2035-amino-acid chain: Proline-rich protein 12 (2035 aa).

Disordered regions lie at residues 210-280 (GGGV…ERAL), 292-311 (RPAS…LQHY), 329-584 (CSPL…GAPG), and 645-685 (QAPS…GTPY). Positions 223–240 (QTPPYRPGPPDPPPPPRH) are enriched in pro residues. Low complexity predominate over residues 249–261 (ASSSAATAAEPSS). Residues 296–305 (AQPPPPPPPA) are compositionally biased toward pro residues. Residues Ser330 and Ser338 each carry the phosphoserine modification. Residues 338–364 (SPGAGEPSKGGPSGATAGAAGRATGPE) are compositionally biased toward low complexity. Gly residues predominate over residues 365-377 (TAGGGAAGGGGGY). 2 stretches are compositionally biased toward low complexity: residues 408 to 429 (STAT…AGKA) and 437 to 455 (SQAY…QAYG). Positions 476–487 (PPQPPSGPPPPG) are enriched in pro residues. Composition is skewed to polar residues over residues 490–501 (TCQSYSPDQLQG) and 520–534 (GLPT…STGH). A compositionally biased stretch (gly residues) spans 540-555 (GHGGGWGPSSLGGGGE). Ser648 carries the phosphoserine modification. Gly residues predominate over residues 670 to 681 (GLGGSGGAGGAP). The residue at position 735 (Thr735) is a Phosphothreonine. 4 disordered regions span residues 755–844 (AFLQ…PLQL), 851–870 (HGLE…SLEP), 879–920 (GALE…APRF), and 946–1061 (EMFG…CSTK). The span at 830–841 (PQPPPPPPPPMP) shows a compositional bias: pro residues. Ser859 bears the Phosphoserine mark. Over residues 1031–1046 (SAPPPPPPPPPPPPVS) the composition is skewed to pro residues. A phosphoserine mark is found at Ser1070 and Ser1128. Disordered stretches follow at residues 1112-1244 (RRLP…DHNS), 1288-1355 (PLYQ…SPCK), 1367-1567 (TLPS…GEGI), and 1662-1839 (HRPP…PGRL). The span at 1190–1199 (KPRGRGRGRG) shows a compositional bias: basic residues. The segment covering 1200–1214 (RKAEEMGGTRLEPLK) has biased composition (basic and acidic residues). Lys1214 carries the post-translational modification N6-acetyllysine. Thr1295 is subject to Phosphothreonine. Ser1299 carries the phosphoserine modification. A compositionally biased stretch (pro residues) spans 1314–1329 (QPPPPTVPTVPHPAPS). Phosphoserine is present on residues Ser1372, Ser1373, and Ser1378. A compositionally biased stretch (pro residues) spans 1449 to 1529 (PPTPPPAPTP…PPEEPPAPSP (81 aa)). Basic and acidic residues predominate over residues 1535 to 1547 (PDARPLHLAKKQE). Thr1555 bears the Phosphothreonine mark. Ser1562 carries the post-translational modification Phosphoserine. The segment covering 1698-1709 (ETPEKMTSEKPP) has biased composition (basic and acidic residues). Thr1699 bears the Phosphothreonine mark. The segment covering 1710 to 1730 (EPAPEPAVPEPPAPEKPSPPR) has biased composition (pro residues). Residues 1731–1768 (PVEKEKEKEKEKEKEKERVTRPLRSERATSGRQMRTDR) are compositionally biased toward basic and acidic residues. Polar residues predominate over residues 1769-1779 (SLATGQSTTSR). The span at 1817-1828 (SSSDSESSPGAP) shows a compositional bias: low complexity. Ser1924 is subject to Phosphoserine.

As to expression, expressed in brain.

The protein localises to the nucleus. Its subcellular location is the postsynaptic density. It is found in the synapse. The protein resides in the synaptosome. The polypeptide is Proline-rich protein 12 (Mus musculus (Mouse)).